The sequence spans 426 residues: tRNA (guanine(37)-N(1))-methyltransferase (426 aa).

S-adenosyl-L-methionine-binding positions include histidine 203, 242 to 243 (DL), 269 to 270 (DA), and asparagine 292. Positions 374–426 (RISFKMPTLKKRKDTENNDDQENNNNSSNNNNNNKIDYNEAVSSGGEGKKIKH) are disordered. The span at 396–407 (NNNNSSNNNNNN) shows a compositional bias: low complexity.

This sequence belongs to the class I-like SAM-binding methyltransferase superfamily. TRM5/TYW2 family. Monomer.

It is found in the mitochondrion matrix. The protein localises to the nucleus. Its subcellular location is the cytoplasm. It catalyses the reaction guanosine(37) in tRNA + S-adenosyl-L-methionine = N(1)-methylguanosine(37) in tRNA + S-adenosyl-L-homocysteine + H(+). In terms of biological role, specifically methylates the N1 position of guanosine-37 in various cytoplasmic and mitochondrial tRNAs. Methylation is not dependent on the nature of the nucleoside 5' of the target nucleoside. This is the first step in the biosynthesis of wybutosine (yW), a modified base adjacent to the anticodon of tRNAs and required for accurate decoding. The chain is tRNA (guanine(37)-N(1))-methyltransferase (trmt5) from Heterostelium pallidum (strain ATCC 26659 / Pp 5 / PN500) (Cellular slime mold).